The chain runs to 93 residues: Small ribosomal subunit protein bS16 (93 aa).

Belongs to the bacterial ribosomal protein bS16 family.

The polypeptide is Small ribosomal subunit protein bS16 (Opitutus terrae (strain DSM 11246 / JCM 15787 / PB90-1)).